The primary structure comprises 555 residues: Sulfite reductase [NADPH] hemoprotein beta-component (555 aa).

Residues Cys430, Cys436, Cys475, and Cys479 each contribute to the [4Fe-4S] cluster site. Cys479 provides a ligand contact to siroheme.

The protein belongs to the nitrite and sulfite reductase 4Fe-4S domain family. As to quaternary structure, alpha(8)-beta(8). The alpha component is a flavoprotein, the beta component is a hemoprotein. The cofactor is siroheme. [4Fe-4S] cluster serves as cofactor.

The enzyme catalyses hydrogen sulfide + 3 NADP(+) + 3 H2O = sulfite + 3 NADPH + 4 H(+). The protein operates within sulfur metabolism; hydrogen sulfide biosynthesis; hydrogen sulfide from sulfite (NADPH route): step 1/1. Its function is as follows. Component of the sulfite reductase complex that catalyzes the 6-electron reduction of sulfite to sulfide. This is one of several activities required for the biosynthesis of L-cysteine from sulfate. This chain is Sulfite reductase [NADPH] hemoprotein beta-component, found in Leptospira biflexa serovar Patoc (strain Patoc 1 / Ames).